The primary structure comprises 236 residues: Putative glutamine amidotransferase-like protein YvdE (236 aa).

In terms of domain architecture, Glutamine amidotransferase type-1 spans 17–236 (SPFWWNKVSY…IFEIFANGTI (220 aa)).

This is Putative glutamine amidotransferase-like protein YvdE (yvdE) from Lactococcus lactis subsp. lactis (strain IL1403) (Streptococcus lactis).